Here is a 952-residue protein sequence, read N- to C-terminus: Meiotic coiled-coil protein 3 (952 aa).

Coiled-coil stretches lie at residues 283–611 (QLLQ…KEHL), 684–716 (TKKF…EDKL), and 839–942 (SLEN…RERE).

It localises to the cytoplasm. In terms of biological role, has a role in meiosis. The chain is Meiotic coiled-coil protein 3 (mcp3) from Schizosaccharomyces pombe (strain 972 / ATCC 24843) (Fission yeast).